The chain runs to 181 residues: Shikimate kinase 2 (181 aa).

An ATP-binding site is contributed by Gly-12–Thr-17. Residues Thr-16 and Asp-32 each contribute to the Mg(2+) site. Residues Asp-34, Arg-58, and Gly-79 each coordinate substrate. The interval Glu-112–Lys-126 is LID domain. An ATP-binding site is contributed by Arg-120. Arg-139 lines the substrate pocket.

This sequence belongs to the shikimate kinase family. AroL subfamily. In terms of assembly, monomer. It depends on Mg(2+) as a cofactor.

The protein localises to the cytoplasm. It catalyses the reaction shikimate + ATP = 3-phosphoshikimate + ADP + H(+). Its pathway is metabolic intermediate biosynthesis; chorismate biosynthesis; chorismate from D-erythrose 4-phosphate and phosphoenolpyruvate: step 5/7. In terms of biological role, catalyzes the specific phosphorylation of the 3-hydroxyl group of shikimic acid using ATP as a cosubstrate. The polypeptide is Shikimate kinase 2 (Salmonella schwarzengrund (strain CVM19633)).